Consider the following 1431-residue polypeptide: Probable ATP-dependent RNA helicase spindle-E (1431 aa).

The 168-residue stretch at 127–294 (LAAIRENPVV…FAMSSSLPPV (168 aa)) folds into the Helicase ATP-binding domain. 140-147 (GETGCGKT) is a binding site for ATP. The DEAH box motif lies at 240 to 243 (DEVH). A Helicase C-terminal domain is found at 354-526 (QSQQSYEEAK…NSVLKAKELE (173 aa)). In terms of domain architecture, Tudor spans 937 to 1000 (AKAVTKGLQL…RLMSPQLKRD (64 aa)).

This sequence belongs to the DEAD box helicase family. DEAH subfamily.

The protein resides in the cytoplasm. The catalysed reaction is ATP + H2O = ADP + phosphate + H(+). In terms of biological role, probable ATP-binding RNA helicase which plays a central role during spermatogenesis and oogenesis by repressing transposable elements and preventing their mobilization, which is essential for the germline integrity. Acts via the piRNA metabolic process, which mediates the repression of transposable elements during meiosis by forming complexes composed of piRNAs and Piwi and govern the methylation and subsequent repression of transposons. Involved in the repression of LTR retrotransposon copia. Also involved in telomere regulation by repressing specialized telomeric retroelements HeT-A, TAHRE, and TART; Drosophila telomeres being maintained by transposition of specialized telomeric retroelements. Involved in telomeric trans-silencing, a repression mechanism by which a transposon or a transgene inserted in subtelomeric heterochromatin has the capacity to repress in trans in the female germline, a homologous transposon, or transgene located in euchromatin. Involved in the repression of testis-expressed Stellate genes by the homologous Su(Ste) repeats. Required for anteroposterior and dorsoventral axis formation during oogenesis. This is Probable ATP-dependent RNA helicase spindle-E (spn-E) from Drosophila mojavensis (Fruit fly).